Reading from the N-terminus, the 37-residue chain is Large ribosomal subunit protein bL36c (37 aa).

It belongs to the bacterial ribosomal protein bL36 family.

The protein resides in the plastid. Its subcellular location is the chloroplast. This is Large ribosomal subunit protein bL36c from Oltmannsiellopsis viridis (Marine flagellate).